We begin with the raw amino-acid sequence, 176 residues long: Cytochrome b (176 aa).

Transmembrane regions (helical) follow at residues 33–53, 77–98, and 113–133; these read FGSL…FLAM, WLIR…FLHV, and WNIG…GYVL. Heme b-binding residues include His83 and His97.

Belongs to the cytochrome b family. The cytochrome bc1 complex contains 11 subunits: 3 respiratory subunits (MT-CYB, CYC1 and UQCRFS1), 2 core proteins (UQCRC1 and UQCRC2) and 6 low-molecular weight proteins (UQCRH/QCR6, UQCRB/QCR7, UQCRQ/QCR8, UQCR10/QCR9, UQCR11/QCR10 and a cleavage product of UQCRFS1). This cytochrome bc1 complex then forms a dimer. Heme b is required as a cofactor.

It localises to the mitochondrion inner membrane. In terms of biological role, component of the ubiquinol-cytochrome c reductase complex (complex III or cytochrome b-c1 complex) that is part of the mitochondrial respiratory chain. The b-c1 complex mediates electron transfer from ubiquinol to cytochrome c. Contributes to the generation of a proton gradient across the mitochondrial membrane that is then used for ATP synthesis. In Sciurus carolinensis (Eastern gray squirrel), this protein is Cytochrome b (MT-CYB).